The sequence spans 93 residues: Pyrimidine/purine nucleoside phosphorylase (93 aa).

Belongs to the nucleoside phosphorylase PpnP family.

It catalyses the reaction a purine D-ribonucleoside + phosphate = a purine nucleobase + alpha-D-ribose 1-phosphate. It carries out the reaction adenosine + phosphate = alpha-D-ribose 1-phosphate + adenine. The catalysed reaction is cytidine + phosphate = cytosine + alpha-D-ribose 1-phosphate. The enzyme catalyses guanosine + phosphate = alpha-D-ribose 1-phosphate + guanine. It catalyses the reaction inosine + phosphate = alpha-D-ribose 1-phosphate + hypoxanthine. It carries out the reaction thymidine + phosphate = 2-deoxy-alpha-D-ribose 1-phosphate + thymine. The catalysed reaction is uridine + phosphate = alpha-D-ribose 1-phosphate + uracil. The enzyme catalyses xanthosine + phosphate = alpha-D-ribose 1-phosphate + xanthine. Catalyzes the phosphorolysis of diverse nucleosides, yielding D-ribose 1-phosphate and the respective free bases. Can use uridine, adenosine, guanosine, cytidine, thymidine, inosine and xanthosine as substrates. Also catalyzes the reverse reactions. This chain is Pyrimidine/purine nucleoside phosphorylase, found in Tolumonas auensis (strain DSM 9187 / NBRC 110442 / TA 4).